Reading from the N-terminus, the 337-residue chain is Formamidase (337 aa).

The 244-residue stretch at 14–257 (VVIGLVQLQL…DEIITAEVRP (244 aa)) folds into the CN hydrolase domain. Glutamate 60 acts as the Proton acceptor in catalysis. Residue lysine 129 is the Proton donor of the active site. Residue cysteine 162 is the Nucleophile of the active site.

Belongs to the carbon-nitrogen hydrolase superfamily. Aliphatic amidase family.

The enzyme catalyses formamide + H2O = formate + NH4(+). Is an aliphatic amidase with a restricted substrate specificity, as it only hydrolyzes formamide. In Bradyrhizobium diazoefficiens (strain JCM 10833 / BCRC 13528 / IAM 13628 / NBRC 14792 / USDA 110), this protein is Formamidase.